Consider the following 449-residue polypeptide: MAAQAAPELAKLDLNKNTGSVEANAVSAGGSEKEEAENEGDSDDDRDDEQAGGSAEVNAEKKKKKKRPKKKKKTAKVQSSPPRIPLTTLFPNSNFPEGEIVEYLNENSYRTTNEEKRHLDRMNNDFLTEYRQAAEIHRQVRQYAQKELIKPGATLTDIAEGIEDGVRHLTGHMGLEEGDSLVAGMGFPTGLNINHCAAHYSPNAGNKVVLQHGDVMKVDFGVHINGRIVDSAFTVAFDPVFDPLLTAVKEATNTGIKEAGIDVRMSDIGAAIQETMESYELELNGTSYPIKAIRNLNGHTIGQYEIHGGVNGKSVPIVKGGDQTKMEEGETYAIETFGSTGKGYVRDDMETSHYAKVPNAPSVPLRLSSAKNLYSLINKNFGTLPFCRRYLDRLGQEKYLLGLNNLVSSGLVDAYPPLCDVKGSYTAQFEHTILLRPNVKEVISRGDDY.

Positions 1–91 are disordered; it reads MAAQAAPELA…PRIPLTTLFP (91 aa). Positions 34 to 50 are enriched in acidic residues; the sequence is EEAENEGDSDDDRDDEQ. A compositionally biased stretch (basic residues) spans 61-75; the sequence is KKKKKKRPKKKKKTA. His-199 serves as a coordination point for substrate. Positions 219, 230, and 299 each coordinate a divalent metal cation. A substrate-binding site is contributed by His-307. A divalent metal cation is bound by residues Glu-335 and Glu-430.

It belongs to the peptidase M24A family. Methionine aminopeptidase eukaryotic type 2 subfamily. Co(2+) serves as cofactor. It depends on Zn(2+) as a cofactor. Requires Mn(2+) as cofactor. Fe(2+) is required as a cofactor.

The protein localises to the cytoplasm. The enzyme catalyses Release of N-terminal amino acids, preferentially methionine, from peptides and arylamides.. Its function is as follows. Cotranslationally removes the N-terminal methionine from nascent proteins. The N-terminal methionine is often cleaved when the second residue in the primary sequence is small and uncharged (Met-Ala-, Cys, Gly, Pro, Ser, Thr, or Val). The chain is Methionine aminopeptidase 2 from Arthroderma benhamiae (strain ATCC MYA-4681 / CBS 112371) (Trichophyton mentagrophytes).